A 410-amino-acid chain; its full sequence is Elongation factor Tu, chloroplastic (410 aa).

A tr-type G domain is found at 10–213 (KPHLNIGTIG…TVDEYIPTPK (204 aa)). Positions 19–26 (GHVDHGKT) are G1. 19–26 (GHVDHGKT) contributes to the GTP binding site. A Mg(2+)-binding site is contributed by Thr26. The segment at 60–64 (GITIN) is G2. The G3 stretch occupies residues 81 to 84 (DCPG). GTP is bound by residues 81-85 (DCPGH) and 136-139 (NKAD). Positions 136–139 (NKAD) are G4. The G5 stretch occupies residues 174–176 (SAI).

It belongs to the TRAFAC class translation factor GTPase superfamily. Classic translation factor GTPase family. EF-Tu/EF-1A subfamily.

Its subcellular location is the plastid. It is found in the chloroplast. It carries out the reaction GTP + H2O = GDP + phosphate + H(+). Functionally, GTP hydrolase that promotes the GTP-dependent binding of aminoacyl-tRNA to the A-site of ribosomes during protein biosynthesis. In Codium fragile (Dead man's fingers), this protein is Elongation factor Tu, chloroplastic (tufA).